Consider the following 120-residue polypeptide: Cytochrome c2 iso-1 (120 aa).

A Pyrrolidone carboxylic acid modification is found at Q1. The heme c site is built by C15, C18, H19, and M98.

The protein belongs to the cytochrome c family. Post-translationally, binds 1 heme c group covalently per subunit.

In terms of biological role, cytochrome c2 is found mainly in purple, non-sulfur, photosynthetic bacteria where it functions as the electron donor to the oxidized bacteriochlorophyll in the photophosphorylation pathway. However, it may also have a role in the respiratory chain and is found in some non-photosynthetic bacteria. This chain is Cytochrome c2 iso-1, found in Rhodospirillum centenum (Rhodocista centenaria).